The sequence spans 362 residues: UDP-N-acetylglucosamine--N-acetylmuramyl-(pentapeptide) pyrophosphoryl-undecaprenol N-acetylglucosamine transferase (362 aa).

UDP-N-acetyl-alpha-D-glucosamine is bound by residues 15-17 (TGG), N127, R165, S191, I247, 266-271 (ALTVSE), and Q292.

The protein belongs to the glycosyltransferase 28 family. MurG subfamily.

The protein resides in the cell inner membrane. The catalysed reaction is di-trans,octa-cis-undecaprenyl diphospho-N-acetyl-alpha-D-muramoyl-L-alanyl-D-glutamyl-meso-2,6-diaminopimeloyl-D-alanyl-D-alanine + UDP-N-acetyl-alpha-D-glucosamine = di-trans,octa-cis-undecaprenyl diphospho-[N-acetyl-alpha-D-glucosaminyl-(1-&gt;4)]-N-acetyl-alpha-D-muramoyl-L-alanyl-D-glutamyl-meso-2,6-diaminopimeloyl-D-alanyl-D-alanine + UDP + H(+). Its pathway is cell wall biogenesis; peptidoglycan biosynthesis. Functionally, cell wall formation. Catalyzes the transfer of a GlcNAc subunit on undecaprenyl-pyrophosphoryl-MurNAc-pentapeptide (lipid intermediate I) to form undecaprenyl-pyrophosphoryl-MurNAc-(pentapeptide)GlcNAc (lipid intermediate II). The sequence is that of UDP-N-acetylglucosamine--N-acetylmuramyl-(pentapeptide) pyrophosphoryl-undecaprenol N-acetylglucosamine transferase from Shewanella putrefaciens (strain CN-32 / ATCC BAA-453).